We begin with the raw amino-acid sequence, 528 residues long: MTPSVDNNLKQGYQYLFEHLEQSRQRAQPNLVLQEIGSVKSVSAGIAIVHGLPSAGFEELLRFPGDIYGIAFNIDEHDIGVIMLGDYSQLNAGDEVKRTGRVVDIPVGADLIGRVIDPLGRTLDGKGNLTSTQRMAIERPAPEIMTRSPVTEPLQTGLKVLDALIPIGKGQRELIMGDRQTGKTSIAIDAILNQKDKNVLCVYCAIGQKSASVAKILATLKHHNAFEYTVVMVTEGNDPPGLDYIAPYAATSIGEYFMEQGRDVLIVYDDLTQHARSYRELSLLLRRPPGREAFPGDIFYLHSRLLERSTHLNEAHGGGSMTALPIIETEEQNMSAYIPTNLISITDGQIYLSPDLFSLGILPAVDVGKSVSRVGGKAQRSAFRKVSGALKLAYAQFEELETFARFGARLDANSLQTIEHGQRIRSCLKQAESSPLSVAAQIVILLALTNDLFDAIDLAAMDSAQSAAIDGLTSLPLPIIEKLEQAESIEEQDQHIILDMLSQALKPFAQGTLRSGDKIQPTVNEANG.

177–184 contributes to the ATP binding site; that stretch reads GDRQTGKT.

It belongs to the ATPase alpha/beta chains family. In terms of assembly, F-type ATPases have 2 components, CF(1) - the catalytic core - and CF(0) - the membrane proton channel. CF(1) has five subunits: alpha(3), beta(3), gamma(1), delta(1), epsilon(1). CF(0) has three main subunits: a(1), b(2) and c(9-12). The alpha and beta chains form an alternating ring which encloses part of the gamma chain. CF(1) is attached to CF(0) by a central stalk formed by the gamma and epsilon chains, while a peripheral stalk is formed by the delta and b chains.

It is found in the cell inner membrane. The catalysed reaction is ATP + H2O + 4 H(+)(in) = ADP + phosphate + 5 H(+)(out). In terms of biological role, produces ATP from ADP in the presence of a proton gradient across the membrane. The alpha chain is a regulatory subunit. The chain is ATP synthase subunit alpha 1 from Pseudoalteromonas atlantica (strain T6c / ATCC BAA-1087).